A 105-amino-acid chain; its full sequence is Large ribosomal subunit protein eL36 (105 aa).

The interval 9–31 is disordered; the sequence is VGLNKGHKVTKNVSKPRHSRRRR. The span at 13–31 shows a compositional bias: basic residues; that stretch reads KGHKVTKNVSKPRHSRRRR. Position 62 is an N6-acetyllysine (K62).

It belongs to the eukaryotic ribosomal protein eL36 family. Component of the large ribosomal subunit.

Its subcellular location is the cytoplasm. It localises to the cytosol. In terms of biological role, component of the large ribosomal subunit. The ribosome is a large ribonucleoprotein complex responsible for the synthesis of proteins in the cell. This chain is Large ribosomal subunit protein eL36 (RPL36), found in Oryctolagus cuniculus (Rabbit).